A 99-amino-acid chain; its full sequence is Sec-independent protein translocase protein TatA (99 aa).

The helical transmembrane segment at 1–21 (MIGNLKPLEIVLIIAVILLLF) threads the bilayer. Residues 46–99 (AMKKDDAATAAPTTETVADDTVPPQSTTARTIQAAPGDVTSSRPVSEAKPTTQS) form a disordered region. The segment covering 53–69 (ATAAPTTETVADDTVPP) has biased composition (low complexity). Residues 84 to 99 (VTSSRPVSEAKPTTQS) show a composition bias toward polar residues.

The protein belongs to the TatA/E family. As to quaternary structure, the Tat system comprises two distinct complexes: a TatABC complex, containing multiple copies of TatA, TatB and TatC subunits, and a separate TatA complex, containing only TatA subunits. Substrates initially bind to the TatABC complex, which probably triggers association of the separate TatA complex to form the active translocon.

It is found in the cell membrane. Functionally, part of the twin-arginine translocation (Tat) system that transports large folded proteins containing a characteristic twin-arginine motif in their signal peptide across membranes. TatA could form the protein-conducting channel of the Tat system. The chain is Sec-independent protein translocase protein TatA from Streptomyces griseus subsp. griseus (strain JCM 4626 / CBS 651.72 / NBRC 13350 / KCC S-0626 / ISP 5235).